Consider the following 76-residue polypeptide: Precursor of CEP7 (76 aa).

The signal sequence occupies residues 1–27 (MAKCTLTSLILLLIVLVLIQESHIVEG). Residues 28-61 (RPLKSSRISNVSKKFAAGNSNLSSKLTTEDHSLD) constitute a propeptide that is removed on maturation. Residues Asn37 and Asn48 are each glycosylated (N-linked (GlcNAc...) asparagine). Residues 49–76 (LSSKLTTEDHSLDAFRPTNPGNSPGIGH) are disordered. Hydroxyproline is present on residues Pro65, Pro68, and Pro72.

This sequence belongs to the C-terminally encoded plant signaling peptide (CEP) family. As to quaternary structure, interacts with CEP receptors (e.g. CEPR1 and CEPR2). The mature small signaling peptide is generated by proteolytic processing of the longer precursor.

The protein localises to the secreted. It is found in the extracellular space. It localises to the apoplast. Its function is as follows. Extracellular signaling peptide that may regulate primary root growth rate and systemic nitrogen (N)-demand signaling. Mediates up-regulation of genes involved in N uptake and assimilation pathways. In Arabidopsis thaliana (Mouse-ear cress), this protein is Precursor of CEP7.